The chain runs to 191 residues: Small ribosomal subunit protein eS7 (191 aa).

Belongs to the eukaryotic ribosomal protein eS7 family.

In Hordeum vulgare (Barley), this protein is Small ribosomal subunit protein eS7 (RPS7).